Here is a 372-residue protein sequence, read N- to C-terminus: NAD(P)H-quinone oxidoreductase subunit 1 (372 aa).

8 consecutive transmembrane segments (helical) span residues 29-49 (WLPF…LVTV), 97-117 (LLFT…YLVV), 128-148 (LGVA…GLLM), 176-196 (LALA…IDIV), 204-224 (ILGW…IAVL), 254-274 (FALY…LVAV), 308-328 (TLGI…AVLL), and 351-371 (VALV…FAFG).

It belongs to the complex I subunit 1 family. In terms of assembly, NDH-1 is composed of at least 11 different subunits.

It is found in the cellular thylakoid membrane. It carries out the reaction a plastoquinone + NADH + (n+1) H(+)(in) = a plastoquinol + NAD(+) + n H(+)(out). It catalyses the reaction a plastoquinone + NADPH + (n+1) H(+)(in) = a plastoquinol + NADP(+) + n H(+)(out). Functionally, NDH-1 shuttles electrons from an unknown electron donor, via FMN and iron-sulfur (Fe-S) centers, to quinones in the respiratory and/or the photosynthetic chain. The immediate electron acceptor for the enzyme in this species is believed to be plastoquinone. Couples the redox reaction to proton translocation, and thus conserves the redox energy in a proton gradient. This chain is NAD(P)H-quinone oxidoreductase subunit 1, found in Trichodesmium erythraeum (strain IMS101).